A 37-amino-acid chain; its full sequence is MKVRASVKRMCDKCRVIRRHGRVMVICANPKHKQRQG.

Belongs to the bacterial ribosomal protein bL36 family.

This is Large ribosomal subunit protein bL36 from Synechococcus sp. (strain RCC307).